Reading from the N-terminus, the 225-residue chain is MKLIVSVMPRSLEEAQALDATRYLDADIIEWRADYLPKEAILQVAPAIFEKFAGRELVFTLRTRSEGGEIDLSPEEYIHLIKEVAQLYQPDYIDFEYYSYKDVFEEMLDFPNLVLSYHNFQETPENMMEILSELTILNPKLVKVAVMAHTEQDVLDLMNYTRGFKTLNPEQEYVTISMGKVGKVSRITADVTGSSWSFASLDEVSAPGQISLASMKKIREILDEA.

Residues serine 6, 30-32, and arginine 62 contribute to the 3-dehydroquinate site; that span reads EWR. Residue histidine 118 is the Proton donor/acceptor of the active site. The active-site Schiff-base intermediate with substrate is the lysine 143. Residues arginine 186, serine 205, and glutamine 209 each contribute to the 3-dehydroquinate site.

Belongs to the type-I 3-dehydroquinase family. As to quaternary structure, homodimer.

It catalyses the reaction 3-dehydroquinate = 3-dehydroshikimate + H2O. Its pathway is metabolic intermediate biosynthesis; chorismate biosynthesis; chorismate from D-erythrose 4-phosphate and phosphoenolpyruvate: step 3/7. Functionally, involved in the third step of the chorismate pathway, which leads to the biosynthesis of aromatic amino acids. Catalyzes the cis-dehydration of 3-dehydroquinate (DHQ) and introduces the first double bond of the aromatic ring to yield 3-dehydroshikimate. The chain is 3-dehydroquinate dehydratase from Streptococcus pneumoniae (strain Taiwan19F-14).